Here is a 350-residue protein sequence, read N- to C-terminus: Galactokinase (350 aa).

14–17 lines the substrate pocket; it reads EHTD. Residues S46 and 96–102 contribute to the ATP site; that span reads GAGLSSS. Mg(2+) contacts are provided by S102 and E134. Residue D146 is the Proton acceptor of the active site. Y196 contacts substrate.

The protein belongs to the GHMP kinase family. GalK subfamily.

The protein localises to the cytoplasm. The enzyme catalyses alpha-D-galactose + ATP = alpha-D-galactose 1-phosphate + ADP + H(+). The protein operates within carbohydrate metabolism; galactose metabolism. Catalyzes the transfer of the gamma-phosphate of ATP to D-galactose to form alpha-D-galactose-1-phosphate (Gal-1-P). The protein is Galactokinase of Thermotoga maritima (strain ATCC 43589 / DSM 3109 / JCM 10099 / NBRC 100826 / MSB8).